Here is a 104-residue protein sequence, read N- to C-terminus: Interferon alpha-inducible protein 27-like protein 1 (104 aa).

A run of 3 helical transmembrane segments spans residues 14–34, 59–79, and 81–101; these read VAAV…LSAM, GGGV…AAGL, and VTSK…LGSP.

This sequence belongs to the IFI6/IFI27 family.

The protein resides in the membrane. In terms of biological role, plays a role in the apoptotic process and has a pro-apoptotic activity. This is Interferon alpha-inducible protein 27-like protein 1 from Homo sapiens (Human).